A 185-amino-acid polypeptide reads, in one-letter code: MVQRLKAIYLEKAAPRLREMFEYKNVHQIPRIEKIIINCGLGEASQNAKSLDSAMKELSIIAGQKGVITRAKKAIANFKLRKDMPVGISITLRGNSMYAFLDRLINLALPRIKDFQGVSSKGFDGHGNYNLGLKEQLMFPEINFDQIDQIRGMDISIVTTCNTDSEGFYLLETLGMPFKEKFTKN.

It belongs to the universal ribosomal protein uL5 family. Part of the 50S ribosomal subunit; contacts the 5S rRNA.

It localises to the plastid. Its subcellular location is the chloroplast. Its function is as follows. Binds 5S rRNA, forms part of the central protuberance of the 50S subunit. This is Large ribosomal subunit protein uL5c (rpl5) from Chlorokybus atmophyticus (Soil alga).